The sequence spans 360 residues: Peptide chain release factor 1 (360 aa).

Residue Q237 is modified to N5-methylglutamine.

The protein belongs to the prokaryotic/mitochondrial release factor family. In terms of processing, methylated by PrmC. Methylation increases the termination efficiency of RF1.

The protein resides in the cytoplasm. Functionally, peptide chain release factor 1 directs the termination of translation in response to the peptide chain termination codons UAG and UAA. This is Peptide chain release factor 1 from Stutzerimonas stutzeri (strain A1501) (Pseudomonas stutzeri).